Here is a 694-residue protein sequence, read N- to C-terminus: Phosphatase and actin regulator 4 (694 aa).

Disordered stretches follow at residues 1-354 (MEDP…SPLV) and 375-405 (QDIS…PSRL). A compositionally biased stretch (basic residues) spans 45 to 54 (KPWKWRKKKS). Basic and acidic residues predominate over residues 55–84 (SDKFKETSEVLERKISMRKPREELVKRGVL). Residues 63–88 (EVLERKISMRKPREELVKRGVLLEDP) form an RPEL 1 repeat. A phosphoserine mark is found at Ser-116, Ser-118, Ser-129, and Ser-145. 2 stretches are compositionally biased toward low complexity: residues 184-209 (AGST…TAAT) and 231-249 (TLPA…TAPA). Pro residues predominate over residues 250–259 (KQPPIPPPKP). Phosphoserine is present on residues Ser-264, Ser-285, Ser-335, and Ser-337. Over residues 329–352 (LIIPPSSPSPPLPTHIPPEPPRSP) the composition is skewed to pro residues. Residues 381-392 (EDQKTEVPKKIQ) show a composition bias toward basic and acidic residues. Position 420 is a phosphoserine (Ser-420). Thr-425 is subject to Phosphothreonine. A phosphoserine mark is found at Ser-436, Ser-446, Ser-457, Ser-503, Ser-505, Ser-549, and Ser-582. Positions 467 to 562 (VPDDEEEEQT…TNLNSWPRKS (96 aa)) are disordered. Over residues 546 to 559 (SRPSEPETNLNSWP) the composition is skewed to polar residues. RPEL repeat units follow at residues 575–600 (NTLI…QPKN) and 613–638 (RRLT…RFNE). Residues 589 to 608 (ELEQRNILQPKNEADRQAEK) form a disordered region. A Phosphoserine modification is found at Ser-620.

It belongs to the phosphatase and actin regulator family. As to quaternary structure, binds PPP1CA and actin.

Its subcellular location is the cytoplasm. The protein localises to the cell projection. The protein resides in the lamellipodium. In terms of biological role, regulator of protein phosphatase 1 (PP1) required for neural tube and optic fissure closure, and enteric neural crest cell (ENCCs) migration during development. Acts as an activator of PP1 by interacting with PPP1CA and preventing phosphorylation of PPP1CA at 'Thr-320'. During neural tube closure, localizes to the ventral neural tube and activates PP1, leading to down-regulate cell proliferation within cranial neural tissue and the neural retina. Also acts as a regulator of migration of enteric neural crest cells (ENCCs) by activating PP1, leading to dephosphorylation and subsequent activation of cofilin (COF1 or COF2) and repression of the integrin signaling through the RHO/ROCK pathway. This is Phosphatase and actin regulator 4 (Phactr4) from Mus musculus (Mouse).